A 293-amino-acid chain; its full sequence is Phosphate-binding protein PstS 2 (293 aa).

An N-terminal signal peptide occupies residues 1-23 (MKKHKMLSLLAVSGLMGIGILAG). A lipid anchor (N-palmitoyl cysteine) is attached at C24. Residue C24 is the site of S-diacylglycerol cysteine attachment.

Belongs to the PstS family. In terms of assembly, the complex is composed of two ATP-binding proteins (PstB), two transmembrane proteins (PstC and PstA) and a solute-binding protein (PstS).

It localises to the cell membrane. Its function is as follows. Part of the ABC transporter complex PstSACB involved in phosphate import. The chain is Phosphate-binding protein PstS 2 (pstS2) from Streptococcus agalactiae serotype III (strain NEM316).